Consider the following 165-residue polypeptide: MDALRLPRRLGVLLWKVVLLFVYAEDCRAQCGKDCRAYCCNGSTPHCCSYYAYIGSILSGTAIAGIVFGIVFIMGVIAGIAICICMCMKNNRGTRVGVIRAAHINAISYPMAPPPYTYDHETEYCTDLPPPYSPAPQASAQRSPPPPYPGNSRKYSSSQNRICNN.

Residues 1–29 (MDALRLPRRLGVLLWKVVLLFVYAEDCRA) form the signal peptide. The Extracellular segment spans residues 30–61 (QCGKDCRAYCCNGSTPHCCSYYAYIGSILSGT). A helical transmembrane segment spans residues 62–82 (AIAGIVFGIVFIMGVIAGIAI). At 83–165 (CICMCMKNNR…SSSQNRICNN (83 aa)) the chain is on the cytoplasmic side. Residues 127–165 (DLPPPYSPAPQASAQRSPPPPYPGNSRKYSSSQNRICNN) form a disordered region. The span at 153 to 165 (RKYSSSQNRICNN) shows a compositional bias: polar residues.

This sequence belongs to the CYYR1 family.

The protein resides in the membrane. This chain is Cysteine and tyrosine-rich protein 1 (Cyyr1), found in Rattus norvegicus (Rat).